The primary structure comprises 334 residues: MDYTVVWLAAGISFLVTLVLGPVTIPLLQRLKFGQTIRAEGPAAHMAKTGTPTMGGIMFLIGIAVAGAVLLVSNIPGRAEGLVVLAVTLGYGLIGFLDDFIKVVLKRNLGLKAREKILGQLVFATVLAVVAVFKLGRGTDYIIPFSSGISFDLGWWPFFFLTLFVLLGTSNGVNLTDGLDGLASGATVFTATAFAILALVTGKIGLAIVLAAVVGGCLGFLFYNRHPAKVFMGDTGSLALGGALGAGAVVTRNELLLVVIGGLYVLETLSVIIQVISFKTTGRRVFRMSPLHHHFELSGWSERKVVRNFWLLSFLFSLVGLLGAQDFWLWLSNR.

The next 9 membrane-spanning stretches (helical) occupy residues 5 to 25 (VVWLAAGISFLVTLVLGPVTI), 52 to 72 (PTMGGIMFLIGIAVAGAVLLV), 81 to 101 (GLVVLAVTLGYGLIGFLDDFI), 116 to 136 (KILGQLVFATVLAVVAVFKLG), 148 to 168 (GISFDLGWWPFFFLTLFVLLG), 181 to 200 (GLASGATVFTATAFAILALV), 230 to 250 (VFMGDTGSLALGGALGAGAVV), 256 to 276 (LLVVIGGLYVLETLSVIIQVI), and 309 to 329 (FWLLSFLFSLVGLLGAQDFWL).

It belongs to the glycosyltransferase 4 family. MraY subfamily. Mg(2+) is required as a cofactor.

It is found in the cell membrane. The catalysed reaction is UDP-N-acetyl-alpha-D-muramoyl-L-alanyl-gamma-D-glutamyl-meso-2,6-diaminopimeloyl-D-alanyl-D-alanine + di-trans,octa-cis-undecaprenyl phosphate = di-trans,octa-cis-undecaprenyl diphospho-N-acetyl-alpha-D-muramoyl-L-alanyl-D-glutamyl-meso-2,6-diaminopimeloyl-D-alanyl-D-alanine + UMP. The protein operates within cell wall biogenesis; peptidoglycan biosynthesis. In terms of biological role, catalyzes the initial step of the lipid cycle reactions in the biosynthesis of the cell wall peptidoglycan: transfers peptidoglycan precursor phospho-MurNAc-pentapeptide from UDP-MurNAc-pentapeptide onto the lipid carrier undecaprenyl phosphate, yielding undecaprenyl-pyrophosphoryl-MurNAc-pentapeptide, known as lipid I. The polypeptide is Phospho-N-acetylmuramoyl-pentapeptide-transferase (Desulforamulus reducens (strain ATCC BAA-1160 / DSM 100696 / MI-1) (Desulfotomaculum reducens)).